Here is a 272-residue protein sequence, read N- to C-terminus: uncharacterized protein (272 aa).

This is an uncharacterized protein from Bacillus anthracis.